Reading from the N-terminus, the 602-residue chain is Elongation factor 4 (602 aa).

Positions 8 to 190 constitute a tr-type G domain; it reads DLIRNFSIVA…AIVHRLPPPK (183 aa). GTP-binding positions include 20 to 25 and 137 to 140; these read DHGKST and NKID.

This sequence belongs to the TRAFAC class translation factor GTPase superfamily. Classic translation factor GTPase family. LepA subfamily.

It is found in the cell inner membrane. The enzyme catalyses GTP + H2O = GDP + phosphate + H(+). In terms of biological role, required for accurate and efficient protein synthesis under certain stress conditions. May act as a fidelity factor of the translation reaction, by catalyzing a one-codon backward translocation of tRNAs on improperly translocated ribosomes. Back-translocation proceeds from a post-translocation (POST) complex to a pre-translocation (PRE) complex, thus giving elongation factor G a second chance to translocate the tRNAs correctly. Binds to ribosomes in a GTP-dependent manner. This Cereibacter sphaeroides (strain KD131 / KCTC 12085) (Rhodobacter sphaeroides) protein is Elongation factor 4.